The following is a 184-amino-acid chain: Protein GrpE (184 aa).

A disordered region spans residues 1 to 32; that stretch reads MEEQKQTPSTPTPDTAAEAAVNAATAAPETAG. Residues 12–32 show a composition bias toward low complexity; sequence TPDTAAEAAVNAATAAPETAG.

The protein belongs to the GrpE family. In terms of assembly, homodimer.

The protein localises to the cytoplasm. Its function is as follows. Participates actively in the response to hyperosmotic and heat shock by preventing the aggregation of stress-denatured proteins, in association with DnaK and GrpE. It is the nucleotide exchange factor for DnaK and may function as a thermosensor. Unfolded proteins bind initially to DnaJ; upon interaction with the DnaJ-bound protein, DnaK hydrolyzes its bound ATP, resulting in the formation of a stable complex. GrpE releases ADP from DnaK; ATP binding to DnaK triggers the release of the substrate protein, thus completing the reaction cycle. Several rounds of ATP-dependent interactions between DnaJ, DnaK and GrpE are required for fully efficient folding. The polypeptide is Protein GrpE (Cupriavidus pinatubonensis (strain JMP 134 / LMG 1197) (Cupriavidus necator (strain JMP 134))).